The sequence spans 229 residues: Enolase-phosphatase E1 (229 aa).

The protein belongs to the HAD-like hydrolase superfamily. MasA/MtnC family. Monomer. The cofactor is Mg(2+).

It carries out the reaction 5-methylsulfanyl-2,3-dioxopentyl phosphate + H2O = 1,2-dihydroxy-5-(methylsulfanyl)pent-1-en-3-one + phosphate. It functions in the pathway amino-acid biosynthesis; L-methionine biosynthesis via salvage pathway; L-methionine from S-methyl-5-thio-alpha-D-ribose 1-phosphate: step 3/6. It participates in amino-acid biosynthesis; L-methionine biosynthesis via salvage pathway; L-methionine from S-methyl-5-thio-alpha-D-ribose 1-phosphate: step 4/6. Bifunctional enzyme that catalyzes the enolization of 2,3-diketo-5-methylthiopentyl-1-phosphate (DK-MTP-1-P) into the intermediate 2-hydroxy-3-keto-5-methylthiopentenyl-1-phosphate (HK-MTPenyl-1-P), which is then dephosphorylated to form the acireductone 1,2-dihydroxy-3-keto-5-methylthiopentene (DHK-MTPene). This is Enolase-phosphatase E1 from Pectobacterium carotovorum subsp. carotovorum (strain PC1).